The primary structure comprises 317 residues: Transaldolase (317 aa).

Residue K126 is the Schiff-base intermediate with substrate of the active site.

It belongs to the transaldolase family. Type 1 subfamily. As to quaternary structure, homodimer.

The protein resides in the cytoplasm. It carries out the reaction D-sedoheptulose 7-phosphate + D-glyceraldehyde 3-phosphate = D-erythrose 4-phosphate + beta-D-fructose 6-phosphate. Its pathway is carbohydrate degradation; pentose phosphate pathway; D-glyceraldehyde 3-phosphate and beta-D-fructose 6-phosphate from D-ribose 5-phosphate and D-xylulose 5-phosphate (non-oxidative stage): step 2/3. Its function is as follows. Transaldolase is important for the balance of metabolites in the pentose-phosphate pathway. The protein is Transaldolase of Burkholderia ambifaria (strain MC40-6).